Here is a 2572-residue protein sequence, read N- to C-terminus: Highly reducing polyketide synthase phiA (2572 aa).

Residues 11–438 form the Ketosynthase family 3 (KS3) domain; that stretch reads IMPIAVVGMS…GANAHVIIES (428 aa). Catalysis depends on for beta-ketoacyl synthase activity residues Cys186, His321, and His361. Residues 591–917 form the Malonyl-CoA:ACP transacylase (MAT) domain; it reads FVFTGQGAQW…HTALARKKDA (327 aa). Residues 983–1120 form an N-terminal hotdog fold region; it reads VDLLGVLERN…GLISVQTPQK (138 aa). A PKS/mFAS DH domain is found at 983–1307; sequence VDLLGVLERN…CATLERDGGG (325 aa). His1015 serves as the catalytic Proton acceptor; for dehydratase activity. The segment at 1150 to 1307 is C-terminal hotdog fold; sequence RKEIDVSQFY…CATLERDGGG (158 aa). Residue Asp1215 is the Proton donor; for dehydratase activity of the active site. The methyltransferase (CMeT) domain stretch occupies residues 1353–1654; it reads LERAAFYYLH…LSSSTNKTNY (302 aa). Residues 1870 to 2182 form the Enoyl reductase (ER) domain; the sequence is GLLDTLHFTE…TGGHMGKLVA (313 aa). The region spanning 2206-2383 is the Ketoreductase (KR) domain; it reads ASYLLVGGLG…ATTLDLGAIS (178 aa). A Carrier domain is found at 2484–2561; the sequence is AASEAICDAL…GLAAKIAKRS (78 aa). The residue at position 2521 (Ser2521) is an O-(pantetheine 4'-phosphoryl)serine.

Pantetheine 4'-phosphate serves as cofactor.

It participates in secondary metabolite biosynthesis. Highly reducing polyketide synthase; part of the gene cluster that mediates the biosynthesis of the antihypercholesterolemic agents phomoidrides which are dimeric anhydrides. The pathway begins with the highly reducing polyketide synthase phiA that catalyzes the formation of a C12-fatty acyl-ACP, starting from one acetate and 5 malonate units. The hydrolase phiM is involved in the release of the C12-fatty acyl chain from phiA. The alkylcitrate synthase (ACS) phiJ and the alkylcitrate dehydratase (ACDH) phiI then give rise to decarboxylated monomeric anhydrides by coupling the C12-fatty acyl chain with oxalacetic acid. The cyclase phiC is responsible for the dimerization of the monomeric anhydrides which leads to the production of prephomoidride that contains the characteristic bicyclo[4.3.1]deca-1,6-diene system of phomoidrides. Iterative oxidation catalyzed by the alpha-ketoglutarate-dependent dioxygenase phiK produced then phomoidride A. Finally, the methyltransferase phiE converts phomoidride A to phomoidride B via an acetalization reaction. The phosphatidylethanolamine-binding protein phiB and phiN are not essential for dimerization and their functions have still to be determined. This Fungal sp. (strain ATCC 74256) protein is Highly reducing polyketide synthase phiA.